Reading from the N-terminus, the 180-residue chain is ATP synthase subunit b (180 aa).

A helical transmembrane segment spans residues 26 to 48; the sequence is SMILFWKAVNTVILLGLVYYFGG.

It belongs to the ATPase B chain family. In terms of assembly, F-type ATPases have 2 components, F(1) - the catalytic core - and F(0) - the membrane proton channel. F(1) has five subunits: alpha(3), beta(3), gamma(1), delta(1), epsilon(1). F(0) has three main subunits: a(1), b(2) and c(10-14). The alpha and beta chains form an alternating ring which encloses part of the gamma chain. F(1) is attached to F(0) by a central stalk formed by the gamma and epsilon chains, while a peripheral stalk is formed by the delta and b chains.

The protein resides in the cell inner membrane. In terms of biological role, f(1)F(0) ATP synthase produces ATP from ADP in the presence of a proton or sodium gradient. F-type ATPases consist of two structural domains, F(1) containing the extramembraneous catalytic core and F(0) containing the membrane proton channel, linked together by a central stalk and a peripheral stalk. During catalysis, ATP synthesis in the catalytic domain of F(1) is coupled via a rotary mechanism of the central stalk subunits to proton translocation. Functionally, component of the F(0) channel, it forms part of the peripheral stalk, linking F(1) to F(0). The chain is ATP synthase subunit b from Sulfurihydrogenibium sp. (strain YO3AOP1).